Reading from the N-terminus, the 304-residue chain is tRNA-uridine aminocarboxypropyltransferase 1 (304 aa).

Disordered stretches follow at residues 1–29 and 165–193; these read MALS…QTTS and RNKA…HEST. Positions 180-193 are enriched in basic and acidic residues; the sequence is RTTDEEGWDLHEST. Residues 206-209 carry the DXTW motif; it reads DSTW.

It belongs to the TDD superfamily. DTWD1 family.

Its subcellular location is the nucleus. The enzyme catalyses a uridine in tRNA + S-adenosyl-L-methionine = a 3-[(3S)-3-amino-3-carboxypropyl]uridine in tRNA + S-methyl-5'-thioadenosine + H(+). In terms of biological role, catalyzes the formation of 3-(3-amino-3-carboxypropyl)uridine (acp3U) at position 20 in the D-loop of several cytoplasmic tRNAs (acp3U(20)). In Mus musculus (Mouse), this protein is tRNA-uridine aminocarboxypropyltransferase 1.